A 454-amino-acid chain; its full sequence is MSGRFAVILAAGQGTRMKSKLYKVLHPVCGKPMVEHVVDQVSKLEFDKTAVIVGHGAEEVKKTLTEKIEFVMQPEQLGTGHAVKCAEHLLASQKGTTVVLCGDTPLITAATIKKLMDTHEANGAKATVLTAHAPDPTGYGRVIRGNQGQVEKIVEHKDASVDELAIAEVNTGTYCFDNEALFEALAEVKNENAQGEYYLPDVIGILRQKGETISAYQTDSLSETMGVNDRVALSQAEAAMRKRINEEWMRQGVTIIDPQTTYISADASIGQDTVLYPNTSIKGPSVIGEDCVIESGTEIASATLGRGVHVCSSVISNSVVADGSSIGPFAHIRPGSDVGENVRVGNFVELKKASIGTGSKVSHLTYVGDAEVGSDVNVGCGVVTVNYDGKNKHKTIIKDGAFVGSGSNLIAPVEIGERAFVAAGSTITDDVPSQALSIARSRQVNKDNYVKKDV.

Positions 1–230 (MSGRFAVILA…LSETMGVNDR (230 aa)) are pyrophosphorylase. UDP-N-acetyl-alpha-D-glucosamine-binding positions include 9–12 (LAAG), Lys23, Gln73, and 78–79 (GT). Mg(2+) is bound at residue Asp103. Residues Gly140, Glu155, Asn170, and Asn228 each coordinate UDP-N-acetyl-alpha-D-glucosamine. Residue Asn228 participates in Mg(2+) binding. Residues 231-251 (VALSQAEAAMRKRINEEWMRQ) are linker. Positions 252–454 (GVTIIDPQTT…NKDNYVKKDV (203 aa)) are N-acetyltransferase. Arg333 and Lys351 together coordinate UDP-N-acetyl-alpha-D-glucosamine. The Proton acceptor role is filled by His363. Positions 366 and 377 each coordinate UDP-N-acetyl-alpha-D-glucosamine. Residues 386 to 387 (NY), Ser405, Ala423, and Arg440 each bind acetyl-CoA.

In the N-terminal section; belongs to the N-acetylglucosamine-1-phosphate uridyltransferase family. It in the C-terminal section; belongs to the transferase hexapeptide repeat family. Homotrimer. Mg(2+) serves as cofactor.

The protein localises to the cytoplasm. It carries out the reaction alpha-D-glucosamine 1-phosphate + acetyl-CoA = N-acetyl-alpha-D-glucosamine 1-phosphate + CoA + H(+). The catalysed reaction is N-acetyl-alpha-D-glucosamine 1-phosphate + UTP + H(+) = UDP-N-acetyl-alpha-D-glucosamine + diphosphate. Its pathway is nucleotide-sugar biosynthesis; UDP-N-acetyl-alpha-D-glucosamine biosynthesis; N-acetyl-alpha-D-glucosamine 1-phosphate from alpha-D-glucosamine 6-phosphate (route II): step 2/2. It functions in the pathway nucleotide-sugar biosynthesis; UDP-N-acetyl-alpha-D-glucosamine biosynthesis; UDP-N-acetyl-alpha-D-glucosamine from N-acetyl-alpha-D-glucosamine 1-phosphate: step 1/1. The protein operates within bacterial outer membrane biogenesis; LPS lipid A biosynthesis. Its function is as follows. Catalyzes the last two sequential reactions in the de novo biosynthetic pathway for UDP-N-acetylglucosamine (UDP-GlcNAc). The C-terminal domain catalyzes the transfer of acetyl group from acetyl coenzyme A to glucosamine-1-phosphate (GlcN-1-P) to produce N-acetylglucosamine-1-phosphate (GlcNAc-1-P), which is converted into UDP-GlcNAc by the transfer of uridine 5-monophosphate (from uridine 5-triphosphate), a reaction catalyzed by the N-terminal domain. In Shouchella clausii (strain KSM-K16) (Alkalihalobacillus clausii), this protein is Bifunctional protein GlmU.